The following is a 651-amino-acid chain: Bromodomain-containing protein 7 (651 aa).

Lys-21 participates in a covalent cross-link: Glycyl lysine isopeptide (Lys-Gly) (interchain with G-Cter in SUMO2). The tract at residues 34 to 103 (VTELSTGSSG…RDRAENEVDR (70 aa)) is disordered. Over residues 35 to 45 (TELSTGSSGHD) the composition is skewed to polar residues. Basic and acidic residues predominate over residues 47-57 (SLFEDRSDHDK). A compositionally biased stretch (basic residues) spans 58–69 (HKDRKRKKRKKG). The Nuclear localization signal motif lies at 65-96 (KRKKGEKQAPGEEKGRKRRRVKEDKKKRDRDR). Residues 70–103 (EKQAPGEEKGRKRRRVKEDKKKRDRDRAENEVDR) are compositionally biased toward basic and acidic residues. Glycyl lysine isopeptide (Lys-Gly) (interchain with G-Cter in SUMO2) cross-links involve residues Lys-127, Lys-186, Lys-197, Lys-201, Lys-212, and Lys-241. Positions 131-235 (VEQTPLQEAL…HSGMKILSQE (105 aa)) constitute a Bromo domain. A disordered region spans residues 252–316 (KTRKQKERTD…RSSNSEREHE (65 aa)). Phosphoserine is present on residues Ser-279 and Ser-289. Residues 290–316 (PAKDNKRKDKDVLEDKWRSSNSEREHE) are compositionally biased toward basic and acidic residues. Lys-305 participates in a covalent cross-link: Glycyl lysine isopeptide (Lys-Gly) (interchain with G-Cter in SUMO2). The residue at position 328 (Lys-328) is an N6-acetyllysine. Residue Lys-344 forms a Glycyl lysine isopeptide (Lys-Gly) (interchain with G-Cter in SUMO2) linkage. Ser-380 carries the post-translational modification Phosphoserine. Lys-389 participates in a covalent cross-link: Glycyl lysine isopeptide (Lys-Gly) (interchain with G-Cter in SUMO2). 3 positions are modified to phosphoserine: Ser-475, Ser-482, and Ser-483. Residues 536–567 (SEEAEVFQRKLDETTRLLRELQEAQNERLSTR) are a coiled coil. At Ser-621 the chain carries Phosphoserine.

Interacts with IRF2 and HNRPUL1. Interacts (via N-terminus) with TP53. Interacts (via C-terminus) with EP300. Interacts with BRCA1. Interacts (via bromo domain) with histone H3 (via N-terminus) acetylated at 'Lys-14' (H3K14ac). Has low affinity for histone H3 acetylated at 'Lys-9' (H3K9ac). Has the highest affinity for histone H3 that is acetylated both at 'Lys-9' (H3K9ac) and at 'Lys-14' (H3K14ac). Has very low affinity for non-acetylated histone H3. Interacts (via bromo domain) with histone H4 (via N-terminus) acetylated at 'Lys-8' (H3K8ac) (in vitro). Interacts with TRIM24, PTPN13 and DVL1. Identified in a complex with SMARCA4/BRG1, SMARCC1/BAF155, SMARCE1/BAF57, DPF2/BAF45D and ARID2, subunits of the SWI/SNF-B (PBAF) chromatin remodeling complex. As to expression, ubiquitous.

It is found in the nucleus. The protein resides in the chromosome. Its function is as follows. Acts both as coactivator and as corepressor. May play a role in chromatin remodeling. Transcriptional corepressor that down-regulates the expression of target genes. Binds to target promoters, leading to increased histone H3 acetylation at 'Lys-9' (H3K9ac). Binds to the ESR1 promoter. Recruits BRCA1 and POU2F1 to the ESR1 promoter. Coactivator for TP53-mediated activation of transcription of a set of target genes. Required for TP53-mediated cell-cycle arrest in response to oncogene activation. Promotes acetylation of TP53 at 'Lys-382', and thereby promotes efficient recruitment of TP53 to target promoters. Inhibits cell cycle progression from G1 to S phase. Activator of the Wnt signaling pathway in a DVL1-dependent manner by negatively regulating the GSK3B phosphotransferase activity. Induces dephosphorylation of GSK3B at 'Tyr-216'. Down-regulates TRIM24-mediated activation of transcriptional activation by AR. This chain is Bromodomain-containing protein 7 (Brd7), found in Mus musculus (Mouse).